Reading from the N-terminus, the 287-residue chain is Ret finger protein-like 4A (287 aa).

The RING-type; degenerate zinc-finger motif lies at 11–53 (CPVCLKDLEEAVQLKCGYACCLQCLNSLQKEPDGEGLLCRFCS). The 199-residue stretch at 78–276 (EPKLKSVLTM…LSICSVINPS (199 aa)) folds into the B30.2/SPRY domain.

In terms of assembly, interacts with PSMB1, UBE2A and CCNB1.

The protein localises to the cytoplasm. Its subcellular location is the nucleus. The sequence is that of Ret finger protein-like 4A (RFPL4A) from Homo sapiens (Human).